A 332-amino-acid chain; its full sequence is 2,3-diketo-L-gulonate reductase (332 aa).

His-44 (proton donor) is an active-site residue. NAD(+)-binding positions include 168-174, 224-225, and 304-306; these read ITMVDMS, WK, and GHE.

Belongs to the LDH2/MDH2 oxidoreductase family. DlgD subfamily. Homodimer.

The protein resides in the cytoplasm. The enzyme catalyses 3-dehydro-L-gulonate + NAD(+) = 2,3-dioxo-L-gulonate + NADH + H(+). It carries out the reaction 3-dehydro-L-gulonate + NADP(+) = 2,3-dioxo-L-gulonate + NADPH + H(+). In terms of biological role, catalyzes the reduction of 2,3-diketo-L-gulonate in the presence of NADH, to form 3-keto-L-gulonate. The sequence is that of 2,3-diketo-L-gulonate reductase from Salmonella paratyphi C (strain RKS4594).